Reading from the N-terminus, the 376-residue chain is UPF0754 membrane protein Sca_1420 (376 aa).

Transmembrane regions (helical) follow at residues Phe-4–Ile-24 and Leu-356–Val-376.

The protein belongs to the UPF0754 family.

The protein localises to the cell membrane. This is UPF0754 membrane protein Sca_1420 from Staphylococcus carnosus (strain TM300).